The following is a 456-amino-acid chain: uncharacterized protein (456 aa).

2 stretches are compositionally biased toward basic and acidic residues: residues 181-210 and 217-231; these read DQRKESIVNDERKKNPEFREKPDKNEDKKV and KEIENKGIDHEENEE. A disordered region spans residues 181-231; that stretch reads DQRKESIVNDERKKNPEFREKPDKNEDKKVKPPPSLKEIENKGIDHEENEE. The stretch at 216-248 forms a coiled coil; the sequence is LKEIENKGIDHEENEEDKKRELMFKLQLLQKQY. Residues 347 to 365 traverse the membrane as a helical segment; it reads LALAILFNAVWFIAAKMIM. Over residues 383 to 407 the composition is skewed to polar residues; it reads NKSGTTPNSVSPRTWGNSKSPQSEF. The disordered stretch occupies residues 383-456; that stretch reads NKSGTTPNSV…MREQGIETLK (74 aa). Positions 441 to 456 are enriched in basic and acidic residues; that stretch reads DESRREMREQGIETLK.

Belongs to the IIV-6 067R family.

Its subcellular location is the membrane. This is an uncharacterized protein from Invertebrate iridescent virus 6 (IIV-6).